The following is a 695-amino-acid chain: Segment polarity protein dishevelled homolog DVL-1 (695 aa).

One can recognise a DIX domain in the interval 1 to 85 (MAETKIIYHM…RVVSWLVLAE (85 aa)). The disordered stretch occupies residues 89-236 (SDAGSQGTDS…RLRQTDRASS (148 aa)). The span at 142–151 (SHRRERARRR) shows a compositional bias: basic residues. Over residues 152–171 (NRDEAARTNGHPRGDRRREL) the composition is skewed to basic and acidic residues. The span at 177-192 (SASTVLSSELESSSFI) shows a compositional bias: low complexity. Phosphoserine is present on Ser194. The span at 201–214 (SRLSSSTEQSTSSR) shows a compositional bias: low complexity. The span at 215–228 (LIRKHKCRRRKQRL) shows a compositional bias: basic residues. The PDZ domain occupies 251-323 (TVTLNMERHH…NDDAVRVLRE (73 aa)). One can recognise a DEP domain in the interval 425-499 (PDSGLEIRDR…SEQCYYVFGD (75 aa)). Residues 551–580 (PAYQDPGFSYGSGSAGSQQSEGSKSSGSTR) are compositionally biased toward low complexity. The interval 551–641 (PAYQDPGFSY…SQASAVAPGL (91 aa)) is disordered. Over residues 622–635 (SQLSRGSSPRSQAS) the composition is skewed to polar residues.

This sequence belongs to the DSH family. As to quaternary structure, interacts with BRD7 and INVS. Interacts (via PDZ domain) with the VANGL1 and VANGL2 (via C-terminus). Interacts (via PDZ domain) with NXN. Interacts with CXXC4. Interacts with ARRB1; the interaction is enhanced by phosphorylation of DVL1. Interacts with CYLD. Interacts (via PDZ domain) with RYK. Self-associates (via DIX domain) and forms higher homooligomers. Interacts (via PDZ domain) with DACT1 and FZD7, where DACT1 and FZD7 compete for the same binding site. Interacts (via DEP domain) with MUSK; the interaction is direct and mediates the formation a DVL1, MUSK and PAK1 ternary complex involved in AChR clustering. Interacts (via PDZ domain) with TMEM88. Interacts with DCDC2. Interacts with FOXK2. Interacts with PKD1 (via extracellular domain). Interacts (via PDZ domain) with CCDC88C/DAPLE; competes with CCDC88C for binding to frizzled receptor FZD7 and dissociates from CCDC88C following initiation of non-canonical Wnt signaling when CCDC88C displaces DVL1 from ligand-activated FZD7. In terms of processing, ubiquitinated; undergoes both 'Lys-48'-linked ubiquitination, leading to its subsequent degradation by the ubiquitin-proteasome pathway, and 'Lys-63'-linked ubiquitination. The interaction with INVS is required for ubiquitination. Deubiquitinated by CYLD, which acts on 'Lys-63'-linked ubiquitin chains.

Its subcellular location is the cell membrane. The protein resides in the cytoplasm. It localises to the cytosol. It is found in the cytoplasmic vesicle. In terms of biological role, participates in Wnt signaling by binding to the cytoplasmic C-terminus of frizzled family members and transducing the Wnt signal to down-stream effectors. Plays a role both in canonical and non-canonical Wnt signaling. Plays a role in the signal transduction pathways mediated by multiple Wnt genes. Required for LEF1 activation upon WNT1 and WNT3A signaling. DVL1 and PAK1 form a ternary complex with MUSK which is important for MUSK-dependent regulation of AChR clustering during the formation of the neuromuscular junction (NMJ). In Rattus norvegicus (Rat), this protein is Segment polarity protein dishevelled homolog DVL-1 (Dvl1).